The chain runs to 387 residues: Sharpin (387 aa).

Residues Met1 to Ala180 are self-association. Residues Glu122 to Pro132 are compositionally biased toward polar residues. The disordered stretch occupies residues Glu122 to Leu169. Residue Ser165 is modified to Phosphoserine. The interval Leu175–Gly310 is interaction with SHANK1. The 70-residue stretch at Ile219–Val288 folds into the Ubiquitin-like domain. Residues Glu305–Gln349 form a disordered region. Ser312 carries the phosphoserine modification. Residues Pro339–Gln349 show a composition bias toward low complexity. The RanBP2-type zinc finger occupies Leu348 to Cys377.

As to quaternary structure, monomer and homodimer. Component of the LUBAC complex (linear ubiquitin chain assembly complex) which consists of SHARPIN, RBCK1 and RNF31. LUBAC has a MW of approximately 600 kDa suggesting a heteromultimeric assembly of its subunits. Associates with the TNF-R1 signaling complex (TNF-RSC) in a stimulation-dependent manner. Interacts with EYA1, EYA2, SHANK1 and SHANK3 (via ANK repeats). Highly expressed in skeletal muscle and placenta and at lower levels in brain, heart, colon without mucosa, thymus, spleen, kidney, liver, small intestine, lung and peripheral blood leukocytes. Up-regulated in various tumor tissues such as kidney, liver, ovary and pancreas tumors.

It is found in the cytoplasm. The protein localises to the cytosol. The protein resides in the synapse. The protein operates within protein modification; protein ubiquitination. In terms of biological role, component of the LUBAC complex which conjugates linear polyubiquitin chains in a head-to-tail manner to substrates and plays a key role in NF-kappa-B activation and regulation of inflammation. LUBAC conjugates linear polyubiquitin to IKBKG and RIPK1 and is involved in activation of the canonical NF-kappa-B and the JNK signaling pathways. Linear ubiquitination mediated by the LUBAC complex interferes with TNF-induced cell death and thereby prevents inflammation. LUBAC is recruited to the TNF-R1 signaling complex (TNF-RSC) following polyubiquitination of TNF-RSC components by BIRC2 and/or BIRC3 and to conjugate linear polyubiquitin to IKBKG and possibly other components contributing to the stability of the complex. The LUBAC complex is also involved in innate immunity by conjugating linear polyubiquitin chains at the surface of bacteria invading the cytosol to form the ubiquitin coat surrounding bacteria. LUBAC is not able to initiate formation of the bacterial ubiquitin coat, and can only promote formation of linear polyubiquitins on pre-existing ubiquitin. The bacterial ubiquitin coat acts as an 'eat-me' signal for xenophagy and promotes NF-kappa-B activation. Together with OTULIN, the LUBAC complex regulates the canonical Wnt signaling during angiogenesis. This chain is Sharpin, found in Homo sapiens (Human).